A 95-amino-acid polypeptide reads, in one-letter code: Probable dolichol-phosphate mannosyltransferase subunit 3 (95 aa).

The next 2 helical transmembrane spans lie at 10-30 and 44-64; these read AHVI…VPVL and APFF…VYGV.

It belongs to the DPM3 family.

Its subcellular location is the endoplasmic reticulum membrane. The protein operates within protein modification; protein glycosylation. Its function is as follows. Stabilizer subunit of the dolichol-phosphate-mannose synthase complex. This chain is Probable dolichol-phosphate mannosyltransferase subunit 3 (dpm-3), found in Caenorhabditis elegans.